The primary structure comprises 250 residues: Triosephosphate isomerase (250 aa).

A substrate-binding site is contributed by 9–11; sequence NWK. The active-site Electrophile is His-100. Catalysis depends on Glu-169, which acts as the Proton acceptor. Residues Gly-175, Ser-208, and 229–230 contribute to the substrate site; that span reads GG.

Belongs to the triosephosphate isomerase family. As to quaternary structure, homodimer.

It localises to the cytoplasm. The catalysed reaction is D-glyceraldehyde 3-phosphate = dihydroxyacetone phosphate. Its pathway is carbohydrate biosynthesis; gluconeogenesis. It functions in the pathway carbohydrate degradation; glycolysis; D-glyceraldehyde 3-phosphate from glycerone phosphate: step 1/1. Its function is as follows. Involved in the gluconeogenesis. Catalyzes stereospecifically the conversion of dihydroxyacetone phosphate (DHAP) to D-glyceraldehyde-3-phosphate (G3P). The protein is Triosephosphate isomerase of Synechococcus sp. (strain JA-2-3B'a(2-13)) (Cyanobacteria bacterium Yellowstone B-Prime).